We begin with the raw amino-acid sequence, 117 residues long: B-enzyme (117 aa).

Residue aspartate 89 is part of the active site.

It catalyses the reaction Hydrolysis of (1-&gt;4)-beta-linkages between N-acetylmuramic acid and N-acetyl-D-glucosamine residues in a peptidoglycan and between N-acetyl-D-glucosamine residues in chitodextrins.. The sequence is that of B-enzyme (lyzB) from Bacillus subtilis.